Here is a 360-residue protein sequence, read N- to C-terminus: Peptide chain release factor 1 (360 aa).

At glutamine 235 the chain carries N5-methylglutamine. Residues 284-313 (AKRQQAEASTRRNLLGSGDRSDRNRTYNFP) form a disordered region.

This sequence belongs to the prokaryotic/mitochondrial release factor family. In terms of processing, methylated by PrmC. Methylation increases the termination efficiency of RF1.

It is found in the cytoplasm. Functionally, peptide chain release factor 1 directs the termination of translation in response to the peptide chain termination codons UAG and UAA. The protein is Peptide chain release factor 1 of Salmonella arizonae (strain ATCC BAA-731 / CDC346-86 / RSK2980).